The following is a 159-amino-acid chain: Ribosomal RNA large subunit methyltransferase H (159 aa).

S-adenosyl-L-methionine-binding positions include leucine 76, glycine 108, and 127–132 (FGLLTL).

It belongs to the RNA methyltransferase RlmH family. In terms of assembly, homodimer.

Its subcellular location is the cytoplasm. The catalysed reaction is pseudouridine(1915) in 23S rRNA + S-adenosyl-L-methionine = N(3)-methylpseudouridine(1915) in 23S rRNA + S-adenosyl-L-homocysteine + H(+). Its function is as follows. Specifically methylates the pseudouridine at position 1915 (m3Psi1915) in 23S rRNA. This chain is Ribosomal RNA large subunit methyltransferase H, found in Leuconostoc mesenteroides subsp. mesenteroides (strain ATCC 8293 / DSM 20343 / BCRC 11652 / CCM 1803 / JCM 6124 / NCDO 523 / NBRC 100496 / NCIMB 8023 / NCTC 12954 / NRRL B-1118 / 37Y).